Consider the following 297-residue polypeptide: MEESAPVESQGQLPSPHHGSLRRAVAAVLALDGESTLGRRKKRRKDSRPESIIIYRSDNEKTDEEPEESEGGDRPKEEEGEDFLDYPGDDGVWNMPLDSRYVTLTGTITRGKKKGQMVDIHVTLTEKELQELTKPKELSREAAPEGRRACQVGADQGPHVVLWTLVCLPVVFVLSFVVSFYYGTITWYNIFLVYNEERTFWHKISCCPCLILFYPVLIMTMASSLGLYAAVAQLSWSWAAWWRAACDMEKGFCGWLCSKLGLEDCSPYSIVELLESDNISGNLSNKDPIQEVETSTV.

Residues 1–88 (MEESAPVESQ…EGEDFLDYPG (88 aa)) are disordered. Residues 1 to 159 (MEESAPVESQ…CQVGADQGPH (159 aa)) lie on the Extracellular side of the membrane. Low complexity predominate over residues 22–31 (RRAVAAVLAL). Composition is skewed to acidic residues over residues 61–70 (KTDEEPEESE) and 78–88 (EEGEDFLDYPG). The chain crosses the membrane as a helical span at residues 160 to 180 (VVLWTLVCLPVVFVLSFVVSF). The Cytoplasmic portion of the chain corresponds to 181 to 210 (YYGTITWYNIFLVYNEERTFWHKISCCPCL). Residues 211–231 (ILFYPVLIMTMASSLGLYAAV) form a helical membrane-spanning segment. The Extracellular portion of the chain corresponds to 232–297 (AQLSWSWAAW…PIQEVETSTV (66 aa)).

The protein resides in the membrane. The chain is Transmembrane protein 169 (Tmem169) from Mus musculus (Mouse).